The following is a 391-amino-acid chain: Chorismate synthase (391 aa).

Arg48 provides a ligand contact to NADP(+). FMN-binding positions include 126-128, Gly286, 301-305, and Arg328; these read RAS and KPTSS.

This sequence belongs to the chorismate synthase family. FMNH2 serves as cofactor.

It catalyses the reaction 5-O-(1-carboxyvinyl)-3-phosphoshikimate = chorismate + phosphate. The protein operates within metabolic intermediate biosynthesis; chorismate biosynthesis; chorismate from D-erythrose 4-phosphate and phosphoenolpyruvate: step 7/7. Catalyzes the anti-1,4-elimination of the C-3 phosphate and the C-6 proR hydrogen from 5-enolpyruvylshikimate-3-phosphate (EPSP) to yield chorismate, which is the branch point compound that serves as the starting substrate for the three terminal pathways of aromatic amino acid biosynthesis. This reaction introduces a second double bond into the aromatic ring system. In Saccharolobus islandicus (strain M.16.27) (Sulfolobus islandicus), this protein is Chorismate synthase.